We begin with the raw amino-acid sequence, 287 residues long: Large ribosomal subunit protein uL2 (287 aa).

The segment at 221–287 (RGSVMNPCDH…SKRSRGGRDS (67 aa)) is disordered. Positions 258-287 (KTRKKNKPSNKLVVRRRRRISKRSRGGRDS) are enriched in basic residues.

It belongs to the universal ribosomal protein uL2 family. Part of the 50S ribosomal subunit. Forms a bridge to the 30S subunit in the 70S ribosome.

Its function is as follows. One of the primary rRNA binding proteins. Required for association of the 30S and 50S subunits to form the 70S ribosome, for tRNA binding and peptide bond formation. It has been suggested to have peptidyltransferase activity; this is somewhat controversial. Makes several contacts with the 16S rRNA in the 70S ribosome. This Prochlorococcus marinus (strain MIT 9312) protein is Large ribosomal subunit protein uL2.